The primary structure comprises 490 residues: Tegument protein VP16 (490 aa).

Positions 12–37 (MDADGASPPPPRPAGGPKNTPAAPPL) are disordered. Residues S18, S353, S411, and S452 each carry the phosphoserine modification. Residues 411–490 (STAPPTDVSL…DALGIDEYGG (80 aa)) are transcriptional activation.

Belongs to the herpesviridae tegument protein VP16 protein family. Interacts with VP22. Interacts with gH (via C-terminus). Interacts with the virion host shutoff protein (vhs). Interacts with VP11/12. Associates with the VP16-induced complex; binding to host HCFC1 activates VP16 for association with the octamer motif-binding host protein POU2F1, to form a multiprotein-DNA complex responsible for activating transcription of the viral immediate early genes.

It localises to the virion tegument. It is found in the host nucleus. Functionally, transcriptional activator of immediate-early (IE) gene products (alpha genes). Acts as a key activator of lytic infection by initiating the lytic program through the assembly of the transcriptional regulatory VP16-induced complex composed of VP16 and two cellular factors, HCFC1 and POU2F 1. VP16-induced complex represents a regulatory switch: when it is on, it promotes IE-gene expression and thus lytic infection, and when it is off, it limits IE-gene transcription favoring latent infection. Its function is as follows. May play a role in the aggregation of tegument proteins around nucleocapsids during virus morphogenesis. The sequence is that of Tegument protein VP16 from Homo sapiens (Human).